Consider the following 227-residue polypeptide: ATP synthase F(0) complex subunit a (227 aa).

A run of 6 helical transmembrane segments spans residues 12–32 (PCLL…LLLP), 69–89 (WALL…LGLL), 98–118 (QLSM…LTGL), 139–159 (IPAL…ALGV), 170–190 (LLIQ…PSIS), and 196–216 (ILFL…YVFV).

The protein belongs to the ATPase A chain family. In terms of assembly, component of the ATP synthase complex composed at least of ATP5F1A/subunit alpha, ATP5F1B/subunit beta, ATP5MC1/subunit c (homooctomer), MT-ATP6/subunit a, MT-ATP8/subunit 8, ATP5ME/subunit e, ATP5MF/subunit f, ATP5MG/subunit g, ATP5MK/subunit k, ATP5MJ/subunit j, ATP5F1C/subunit gamma, ATP5F1D/subunit delta, ATP5F1E/subunit epsilon, ATP5PF/subunit F6, ATP5PB/subunit b, ATP5PD/subunit d, ATP5PO/subunit OSCP. ATP synthase complex consists of a soluble F(1) head domain (subunits alpha(3) and beta(3)) - the catalytic core - and a membrane F(0) domain - the membrane proton channel (subunits c, a, 8, e, f, g, k and j). These two domains are linked by a central stalk (subunits gamma, delta, and epsilon) rotating inside the F1 region and a stationary peripheral stalk (subunits F6, b, d, and OSCP). Interacts with DNAJC30; interaction is direct.

Its subcellular location is the mitochondrion inner membrane. The enzyme catalyses H(+)(in) = H(+)(out). Its function is as follows. Subunit a, of the mitochondrial membrane ATP synthase complex (F(1)F(0) ATP synthase or Complex V) that produces ATP from ADP in the presence of a proton gradient across the membrane which is generated by electron transport complexes of the respiratory chain. ATP synthase complex consist of a soluble F(1) head domain - the catalytic core - and a membrane F(1) domain - the membrane proton channel. These two domains are linked by a central stalk rotating inside the F(1) region and a stationary peripheral stalk. During catalysis, ATP synthesis in the catalytic domain of F(1) is coupled via a rotary mechanism of the central stalk subunits to proton translocation. With the subunit c (ATP5MC1), forms the proton-conducting channel in the F(0) domain, that contains two crucial half-channels (inlet and outlet) that facilitate proton movement from the mitochondrial intermembrane space (IMS) into the matrix. Protons are taken up via the inlet half-channel and released through the outlet half-channel, following a Grotthuss mechanism. This Gallus gallus (Chicken) protein is ATP synthase F(0) complex subunit a.